Reading from the N-terminus, the 75-residue chain is Cytochrome c oxidase assembly factor 5 (75 aa).

A CHCH domain is found at 28-66; it reads QHDCVVKEGKKPSECLKEGHCRSMQVAFFECKRSMLDTR. Positions 31–42 match the Cx10C motif motif; sequence CVVKEGKKPSEC. 2 disulfide bridges follow: Cys-31–Cys-58 and Cys-42–Cys-48. The Cx9C motif motif lies at 48 to 58; it reads CRSMQVAFFEC.

Belongs to the PET191 family.

Its function is as follows. Involved in an early step of the mitochondrial complex IV assembly process. This Danio rerio (Zebrafish) protein is Cytochrome c oxidase assembly factor 5 (coa5).